Reading from the N-terminus, the 262-residue chain is Spindlin-W (262 aa).

The interval methionine 1 to proline 49 is disordered. Basic residues predominate over residues methionine 27–asparagine 38.

This sequence belongs to the SPIN/STSY family. In terms of tissue distribution, expressed predominantly in ovarian granulosa and thecal cell.

The protein localises to the nucleus. May play a role in mitosis. The chain is Spindlin-W (SPINW) from Gallus gallus (Chicken).